Reading from the N-terminus, the 534-residue chain is Dolichol kinase (534 aa).

The Cytoplasmic segment spans residues 1 to 16 (MTRQCPPQESGAALSG). A helical transmembrane segment spans residues 17–37 (SVLAEAAVVFAVVLSIHAAVW). Over 38 to 72 (DRYSWCAVALAVQAFYVQYKWDRLLQQGNAVFQFR) the chain is Extracellular. A helical transmembrane segment spans residues 73–93 (MSANSGLLPASMVMPLLGLVM). At 94 to 109 (KERCQTAGNPYFERFG) the chain is on the cytoplasmic side. Residues 110–130 (IVVAATGMAVALFSSVLALGI) traverse the membrane as a helical segment. Topologically, residues 131–132 (TR) are extracellular. A helical transmembrane segment spans residues 133-153 (PVPTNTCAISGLAGGVIIYIM). Residues 154–161 (RHSLSVGE) are Cytoplasmic-facing. The helical transmembrane segment at 162–182 (VIEVLEVLLIFVYLNMILLYL) threads the bilayer. The Extracellular segment spans residues 183–186 (LPRC). A helical transmembrane segment spans residues 187-207 (FTPGEALLVLGGISFVLNQLI). Over 208–220 (KRSLTESQGDPVD) the chain is Cytoplasmic. Residues 221-241 (FFLLVVVVGMVLMGVFFSTLF) traverse the membrane as a helical segment. Residues 242 to 252 (VFMDSGTWASS) lie on the Extracellular side of the membrane. Residues 253-273 (IFFHLMTCVLGLGVVLPWLHW) traverse the membrane as a helical segment. At 274 to 293 (LIRRNPLLWLLQFLFYTETR) the chain is on the cytoplasmic side. The helical transmembrane segment at 294–314 (IYLLAYWSLLASVACLVVLYQ) threads the bilayer. Residues 315 to 333 (NAKRSSSESKKHRAPTITR) lie on the Extracellular side of the membrane. A helical membrane pass occupies residues 334 to 350 (KYFHFIVVATYIPGIIF). At 351–355 (DRPLL) the chain is on the cytoplasmic side. Residues 356–376 (YVAATVCLAVFIFLEYVRYFR) traverse the membrane as a helical segment. Residues 377-397 (IKPLGHTLRSLLSLFLDERDS) lie on the Extracellular side of the membrane. The chain crosses the membrane as a helical span at residues 398–418 (GPLILTHIYLLLGMSLPIWLI). The Cytoplasmic segment spans residues 419 to 432 (PRPCTQKDSLEGAR). A helical transmembrane segment spans residues 433 to 453 (ALVPYAGVLAVGVGDTVASIF). Residues 454–468 (GSTMGEIRWPGTKKT) lie on the Extracellular side of the membrane. Residues 455-470 (STMGEIRWPGTKKTFE) are CTP-binding. A helical transmembrane segment spans residues 469 to 489 (FEGTMTSIFAQIISVALILIF). Residues 490-491 (DS) lie on the Cytoplasmic side of the membrane. Residues 492–512 (GVDLNYSYAWILGSISTVSLL) traverse the membrane as a helical segment. Residues 513–534 (EAYTTQIDNLLLPLYLLILLMA) are Extracellular-facing.

This sequence belongs to the polyprenol kinase family.

The protein resides in the endoplasmic reticulum membrane. The catalysed reaction is a di-trans,poly-cis-dolichol + CTP = a di-trans,poly-cis-dolichyl phosphate + CDP + H(+). It functions in the pathway protein modification; protein glycosylation. Catalyzes CTP-mediated phosphorylation of dolichol, the terminal step in de novo dolichyl monophosphate (Dol-P) biosynthesis. Dol-P is a lipid carrier essential for the synthesis of N-linked and O-linked oligosaccharides and for GPI anchors. The sequence is that of Dolichol kinase from Mus musculus (Mouse).